A 709-amino-acid polypeptide reads, in one-letter code: Homeobox-leucine zipper protein TF1 (709 aa).

A DNA-binding region (homeobox) is located at residues 66-125; the sequence is RKRRLQRLTGKQSEVLEGFFSICGHPDDGQKRHLSETTGLGLDQVKFWFQNKRTQVKTMC. Residues 166 to 187 are a coiled coil; sequence NQLAVEMERLMGQSEWLQQEIA. Residues 212 to 441 form the START domain; it reads GQHDQQMIAE…MARQSARMRD (230 aa).

It belongs to the HD-ZIP homeobox family. Class IV subfamily.

It localises to the nucleus. Its function is as follows. Probable transcription factor. The protein is Homeobox-leucine zipper protein TF1 (TF1) of Oryza sativa subsp. japonica (Rice).